Here is a 501-residue protein sequence, read N- to C-terminus: Probable cytosol aminopeptidase (501 aa).

The Mn(2+) site is built by lysine 267 and aspartate 272. Lysine 279 is an active-site residue. Mn(2+) is bound by residues aspartate 290, aspartate 349, and glutamate 351. Residue arginine 353 is part of the active site.

Belongs to the peptidase M17 family. It depends on Mn(2+) as a cofactor.

It localises to the cytoplasm. It carries out the reaction Release of an N-terminal amino acid, Xaa-|-Yaa-, in which Xaa is preferably Leu, but may be other amino acids including Pro although not Arg or Lys, and Yaa may be Pro. Amino acid amides and methyl esters are also readily hydrolyzed, but rates on arylamides are exceedingly low.. The catalysed reaction is Release of an N-terminal amino acid, preferentially leucine, but not glutamic or aspartic acids.. Its function is as follows. Presumably involved in the processing and regular turnover of intracellular proteins. Catalyzes the removal of unsubstituted N-terminal amino acids from various peptides. In Hamiltonella defensa subsp. Acyrthosiphon pisum (strain 5AT), this protein is Probable cytosol aminopeptidase.